Here is a 420-residue protein sequence, read N- to C-terminus: Pregnancy-associated glycoprotein 2 (420 aa).

Residues 1-15 (MKWLVILGLVALSDC) form the signal peptide. Asn56 and Asn79 each carry an N-linked (GlcNAc...) asparagine glycan. Residues 76–417 (YVGNISIGTP…DEGQNRIGLA (342 aa)) form the Peptidase A1 domain. Residue Asp94 is part of the active site. Cystine bridges form between Cys107/Cys112 and Cys268/Cys272. The active site involves Asp277. Cys341 and Cys376 are joined by a disulfide.

The protein belongs to the peptidase A1 family. Expressed throughout the chorion, with the signal localized exclusively over the trophectoderm.

Its subcellular location is the secreted. The protein localises to the extracellular space. The chain is Pregnancy-associated glycoprotein 2 (PAG2) from Sus scrofa (Pig).